A 161-amino-acid chain; its full sequence is MQLSALIEKTVVGMGYELVNFEQAARGLVRVYIDFTPEDADKGSITVEDCEKVTHQLLHVLTVENANYERLEVSSPGLDRPLKKLSDYVRFAGAEALVKLRLPMPNAANRKSFQGILQEPVGETLALEFEGNEGPAKLEFTLADVDKAHLVPQVNFRSRKA.

The protein belongs to the RimP family.

It is found in the cytoplasm. Required for maturation of 30S ribosomal subunits. This Herminiimonas arsenicoxydans protein is Ribosome maturation factor RimP.